The chain runs to 266 residues: Tropinone reductase homolog At1g07440 (266 aa).

Residue 18–42 coordinates NADP(+); it reads LVTGGTKGIGHAIVEEFAGFGAVIH. Ser151 is a substrate binding site. The active-site Proton acceptor is the Tyr164.

The protein belongs to the short-chain dehydrogenases/reductases (SDR) family. SDR65C subfamily.

The protein is Tropinone reductase homolog At1g07440 of Arabidopsis thaliana (Mouse-ear cress).